The primary structure comprises 404 residues: Argininosuccinate synthase (404 aa).

ATP is bound by residues 10–18 (AFSGGLDTS) and alanine 37. L-citrulline-binding residues include tyrosine 88 and serine 93. Glycine 118 is an ATP binding site. The L-aspartate site is built by threonine 120, asparagine 124, and aspartate 125. Asparagine 124 contacts L-citrulline. Residues arginine 128, serine 179, serine 188, glutamate 264, and tyrosine 276 each contribute to the L-citrulline site.

This sequence belongs to the argininosuccinate synthase family. Type 1 subfamily. Homotetramer.

It is found in the cytoplasm. The catalysed reaction is L-citrulline + L-aspartate + ATP = 2-(N(omega)-L-arginino)succinate + AMP + diphosphate + H(+). Its pathway is amino-acid biosynthesis; L-arginine biosynthesis; L-arginine from L-ornithine and carbamoyl phosphate: step 2/3. In Nitrosomonas eutropha (strain DSM 101675 / C91 / Nm57), this protein is Argininosuccinate synthase.